The chain runs to 157 residues: Ribosomal RNA large subunit methyltransferase H (157 aa).

S-adenosyl-L-methionine-binding positions include Leu-73, Gly-105, and 124–129 (LSKMTF).

The protein belongs to the RNA methyltransferase RlmH family. In terms of assembly, homodimer.

It is found in the cytoplasm. It catalyses the reaction pseudouridine(1915) in 23S rRNA + S-adenosyl-L-methionine = N(3)-methylpseudouridine(1915) in 23S rRNA + S-adenosyl-L-homocysteine + H(+). Specifically methylates the pseudouridine at position 1915 (m3Psi1915) in 23S rRNA. In Phocaeicola vulgatus (strain ATCC 8482 / DSM 1447 / JCM 5826 / CCUG 4940 / NBRC 14291 / NCTC 11154) (Bacteroides vulgatus), this protein is Ribosomal RNA large subunit methyltransferase H.